The primary structure comprises 460 residues: Lipase member H-B (460 aa).

An N-terminal signal peptide occupies residues 1–26 (MLLSFYFNGLLLVGCLLSWGRSDTEG). N-linked (GlcNAc...) asparagine glycosylation is found at asparagine 67 and asparagine 75. Serine 163 (nucleophile) is an active-site residue. An N-linked (GlcNAc...) asparagine glycan is attached at asparagine 177. Aspartate 187 serves as the catalytic Charge relay system. Cysteines 242 and 255 form a disulfide. Histidine 257 (charge relay system) is an active-site residue. Cystine bridges form between cysteine 279/cysteine 290 and cysteine 293/cysteine 301. An N-linked (GlcNAc...) asparagine glycan is attached at asparagine 289. Residue asparagine 366 is glycosylated (N-linked (GlcNAc...) asparagine). A disulfide bond links cysteine 436 and cysteine 455.

It belongs to the AB hydrolase superfamily. Lipase family.

Its subcellular location is the secreted. It is found in the cell membrane. It carries out the reaction 1-hexadecanoyl-2-(9Z-octadecenoyl)-sn-glycero-3-phosphate + H2O = 2-(9Z-octadecenoyl)-sn-glycero-3-phosphate + hexadecanoate + H(+). In terms of biological role, hydrolyzes specifically phosphatidic acid (PA) to produce 2-acyl lysophosphatidic acid (LPA; a potent bioactive lipid mediator) and fatty acid. Does not hydrolyze other phospholipids, like phosphatidylserine (PS), phosphatidylcholine (PC) and phosphatidylethanolamine (PE) or triacylglycerol (TG). This is Lipase member H-B (liph-b) from Xenopus laevis (African clawed frog).